The sequence spans 116 residues: Large ribosomal subunit protein bL17 (116 aa).

It belongs to the bacterial ribosomal protein bL17 family. As to quaternary structure, part of the 50S ribosomal subunit. Contacts protein L32.

The polypeptide is Large ribosomal subunit protein bL17 (Rippkaea orientalis (strain PCC 8801 / RF-1) (Cyanothece sp. (strain PCC 8801))).